Here is a 574-residue protein sequence, read N- to C-terminus: Arginine--tRNA ligase (574 aa).

Positions 121–131 (PNIAKEMHIGH) match the 'HIGH' region motif.

This sequence belongs to the class-I aminoacyl-tRNA synthetase family. In terms of assembly, monomer.

The protein localises to the cytoplasm. It catalyses the reaction tRNA(Arg) + L-arginine + ATP = L-arginyl-tRNA(Arg) + AMP + diphosphate. The protein is Arginine--tRNA ligase of Buchnera aphidicola subsp. Acyrthosiphon pisum (strain 5A).